A 375-amino-acid chain; its full sequence is Queuine tRNA-ribosyltransferase (375 aa).

Catalysis depends on Asp94, which acts as the Proton acceptor. Residues 94–98 (DSGGF), Asp148, Gln191, and Gly218 each bind substrate. Residues 249–255 (GVGTPED) form an RNA binding region. Residue Asp268 is the Nucleophile of the active site. Residues 273 to 277 (TRIAR) form an RNA binding; important for wobble base 34 recognition region. Zn(2+) is bound by residues Cys306, Cys308, Cys311, and His337.

Belongs to the queuine tRNA-ribosyltransferase family. As to quaternary structure, homodimer. Within each dimer, one monomer is responsible for RNA recognition and catalysis, while the other monomer binds to the replacement base PreQ1. The cofactor is Zn(2+).

It carries out the reaction 7-aminomethyl-7-carbaguanine + guanosine(34) in tRNA = 7-aminomethyl-7-carbaguanosine(34) in tRNA + guanine. Its pathway is tRNA modification; tRNA-queuosine biosynthesis. Catalyzes the base-exchange of a guanine (G) residue with the queuine precursor 7-aminomethyl-7-deazaguanine (PreQ1) at position 34 (anticodon wobble position) in tRNAs with GU(N) anticodons (tRNA-Asp, -Asn, -His and -Tyr). Catalysis occurs through a double-displacement mechanism. The nucleophile active site attacks the C1' of nucleotide 34 to detach the guanine base from the RNA, forming a covalent enzyme-RNA intermediate. The proton acceptor active site deprotonates the incoming PreQ1, allowing a nucleophilic attack on the C1' of the ribose to form the product. After dissociation, two additional enzymatic reactions on the tRNA convert PreQ1 to queuine (Q), resulting in the hypermodified nucleoside queuosine (7-(((4,5-cis-dihydroxy-2-cyclopenten-1-yl)amino)methyl)-7-deazaguanosine). The chain is Queuine tRNA-ribosyltransferase from Caldanaerobacter subterraneus subsp. tengcongensis (strain DSM 15242 / JCM 11007 / NBRC 100824 / MB4) (Thermoanaerobacter tengcongensis).